The primary structure comprises 258 residues: MENCSSDAVVLHHFDYGEADRIVTLFSLEKGLIKGIARQARKSRKRFGAALEPFSTVHMRWQSRSGRDLVTLQDAELIDLRSGLRHNLLAMALAAYGCELVENLVGETGAQPPVYDLLTAFLTHVNHHGGSEEARLLLELRLLCLSGYAPHLVHCCKCGASFTSETVAFAASLGGSLCLDCVTGVDVQYLSLLSLGSLARALKAPLALFEGFRFGSQTLQQGGQVVSSMLRQQLTRPVKSLSFLSQLTEGSARVAAIR.

It belongs to the RecO family.

Its function is as follows. Involved in DNA repair and RecF pathway recombination. The chain is DNA repair protein RecO from Syntrophotalea carbinolica (strain DSM 2380 / NBRC 103641 / GraBd1) (Pelobacter carbinolicus).